The chain runs to 591 residues: Parathyroid hormone/parathyroid hormone-related peptide receptor (591 aa).

The first 26 residues, 1–26 (MGTARIAPSLALLLCCPVLSSAYALV), serve as a signal peptide directing secretion. The Extracellular segment spans residues 27-188 (DADDVFTKEE…REREVFDRLG (162 aa)). Disulfide bonds link cysteine 48–cysteine 117, cysteine 108–cysteine 148, and cysteine 131–cysteine 170. Residues 67–104 (KGWTPASTSGKPRKEKAPGKFYPESKENKDVPTGSRRR) form a disordered region. Residues 81–96 (EKAPGKFYPESKENKD) are compositionally biased toward basic and acidic residues. N-linked (GlcNAc...) asparagine glycans are attached at residues asparagine 151, asparagine 161, asparagine 166, and asparagine 176. The chain crosses the membrane as a helical span at residues 189–212 (MIYTVGYSMSLASLTVAVLILAYF). The Cytoplasmic portion of the chain corresponds to 213–219 (RRLHCTR). Residues 220-239 (NYIHMHMFLSFMLRAASIFV) traverse the membrane as a helical segment. The Extracellular portion of the chain corresponds to 240 to 282 (KDAVLYSGFTLDEAERLTEEELHIIAQVPPPPAAAAVGYAGCR). The helical transmembrane segment at 283 to 306 (VAVTFFLYFLATNYYWILVEGLYL) threads the bilayer. Residues 307 to 320 (HSLIFMAFFSEKKY) lie on the Cytoplasmic side of the membrane. The chain crosses the membrane as a helical span at residues 321–342 (LWGFTIFGWGLPAVFVAVWVGV). At 343-361 (RATLANTGCWDLSSGHKKW) the chain is on the extracellular side. The helical transmembrane segment at 362–382 (IIQVPILASVVLNFILFINII) threads the bilayer. Residues 383 to 409 (RVLATKLRETNAGRCDTRQQYRKLLRS) lie on the Cytoplasmic side of the membrane. A helical transmembrane segment spans residues 410–428 (TLVLVPLFGVHYTVFMALP). Over 429–440 (YTEVSGTLWQIQ) the chain is Extracellular. Residues 441-463 (MHYEMLFNSFQGFFVAIIYCFCN) form a helical membrane-spanning segment. The Cytoplasmic segment spans residues 464 to 591 (GEVQAEIRKS…LLQEEWETVM (128 aa)). Positions 474–477 (WSRW) match the Important for interaction with G proteins motif.

It belongs to the G-protein coupled receptor 2 family. In terms of assembly, homodimer in the absence of bound ligand. Peptide hormone binding leads to dissociation of the homodimer. N-glycosylated. As to expression, detected in kidney.

It localises to the cell membrane. G-protein-coupled receptor for parathyroid hormone (PTH) and for parathyroid hormone-related peptide (PTHLH). Ligand binding causes a conformation change that triggers signaling via guanine nucleotide-binding proteins (G proteins) and modulates the activity of downstream effectors, such as adenylate cyclase (cAMP). PTH1R is coupled to G(s) G alpha proteins and mediates activation of adenylate cyclase activity. PTHLH dissociates from PTH1R more rapidly than PTH; as consequence, the cAMP response induced by PTHLH decays faster than the response induced by PTH. This Mus musculus (Mouse) protein is Parathyroid hormone/parathyroid hormone-related peptide receptor (Pth1r).